Reading from the N-terminus, the 316-residue chain is Phosducin-like protein 1 (316 aa).

Residues 1-61 (MEQNILNSIL…EDGDKEYEVD (61 aa)) form a disordered region. Residues 12–41 (KFGDGDQERSDIRHNDSGDENDNHSDHEGN) show a composition bias toward basic and acidic residues. Positions 49 to 61 (EGNEDGDKEYEVD) are enriched in acidic residues. One can recognise a Phosducin domain in the interval 95-290 (SDYAEHREKQ…LLSSYDIIPN (196 aa)). Positions 102-156 (EKQKQKYLQKKYETQKMLEKMCFTTRDQPPPTEEENQLDSDDDDLERIRKARMEQ) form a coiled coil. The segment at 175–316 (FGYFKQIDSS…RPESDDDNDD (142 aa)) is thioredoxin fold. Positions 293–316 (KAKNSNWETSLSRKRPESDDDNDD) are disordered.

Belongs to the phosducin family.

The protein localises to the cytoplasm. Functionally, required for normal chemotaxis in response to cAMP and folate. Required for the heterodimerization of the G protein beta and gamma subunits gpbA and gpgA, which is itself thought to be necessary for prenylation of the gamma subunit gpgA and its association with plasma membranes. The polypeptide is Phosducin-like protein 1 (phlp1) (Dictyostelium discoideum (Social amoeba)).